A 194-amino-acid chain; its full sequence is Large ribosomal subunit protein bL9 (194 aa).

Residues 165 to 194 form a disordered region; sequence PEDAEEAVANEEEAEAALLDDEDADEYEQG. Acidic residues predominate over residues 166 to 194; the sequence is EDAEEAVANEEEAEAALLDDEDADEYEQG.

This sequence belongs to the bacterial ribosomal protein bL9 family.

Its function is as follows. Binds to the 23S rRNA. In Rhodospirillum rubrum (strain ATCC 11170 / ATH 1.1.1 / DSM 467 / LMG 4362 / NCIMB 8255 / S1), this protein is Large ribosomal subunit protein bL9.